Reading from the N-terminus, the 277-residue chain is Shikimate dehydrogenase (NADP(+)) (277 aa).

Shikimate-binding positions include 15 to 17 (SLS) and threonine 62. Lysine 66 serves as the catalytic Proton acceptor. Shikimate is bound by residues asparagine 87 and aspartate 102. NADP(+) contacts are provided by residues 127-131 (GAGGA), 151-156 (NRTVDK), and isoleucine 219. Residue tyrosine 221 participates in shikimate binding. Glycine 242 provides a ligand contact to NADP(+).

Belongs to the shikimate dehydrogenase family. In terms of assembly, homodimer.

The enzyme catalyses shikimate + NADP(+) = 3-dehydroshikimate + NADPH + H(+). The protein operates within metabolic intermediate biosynthesis; chorismate biosynthesis; chorismate from D-erythrose 4-phosphate and phosphoenolpyruvate: step 4/7. Involved in the biosynthesis of the chorismate, which leads to the biosynthesis of aromatic amino acids. Catalyzes the reversible NADPH linked reduction of 3-dehydroshikimate (DHSA) to yield shikimate (SA). The polypeptide is Shikimate dehydrogenase (NADP(+)) (Bacillus anthracis (strain CDC 684 / NRRL 3495)).